The chain runs to 23 residues: Magainin-R2 (23 aa).

Expressed by the skin glands.

It is found in the secreted. Its function is as follows. Antimicrobial peptide. This Xenopus ruwenzoriensis (Uganda clawed frog) protein is Magainin-R2.